The following is a 59-amino-acid chain: UPF0434 protein HDEF_0234 (59 aa).

It belongs to the UPF0434 family.

The polypeptide is UPF0434 protein HDEF_0234 (Hamiltonella defensa subsp. Acyrthosiphon pisum (strain 5AT)).